The following is a 291-amino-acid chain: Ribosomal RNA small subunit methyltransferase A (291 aa).

N27, L29, G54, E75, D100, and N125 together coordinate S-adenosyl-L-methionine.

Belongs to the class I-like SAM-binding methyltransferase superfamily. rRNA adenine N(6)-methyltransferase family. RsmA subfamily.

The protein localises to the cytoplasm. The catalysed reaction is adenosine(1518)/adenosine(1519) in 16S rRNA + 4 S-adenosyl-L-methionine = N(6)-dimethyladenosine(1518)/N(6)-dimethyladenosine(1519) in 16S rRNA + 4 S-adenosyl-L-homocysteine + 4 H(+). Its function is as follows. Specifically dimethylates two adjacent adenosines (A1518 and A1519) in the loop of a conserved hairpin near the 3'-end of 16S rRNA in the 30S particle. May play a critical role in biogenesis of 30S subunits. The polypeptide is Ribosomal RNA small subunit methyltransferase A (Streptococcus mutans serotype c (strain ATCC 700610 / UA159)).